The following is a 1432-amino-acid chain: DNA-directed RNA polymerase subunit beta (1432 aa).

It belongs to the RNA polymerase beta chain family. As to quaternary structure, the RNAP catalytic core consists of 2 alpha, 1 beta, 1 beta' and 1 omega subunit. When a sigma factor is associated with the core the holoenzyme is formed, which can initiate transcription.

The enzyme catalyses RNA(n) + a ribonucleoside 5'-triphosphate = RNA(n+1) + diphosphate. DNA-dependent RNA polymerase catalyzes the transcription of DNA into RNA using the four ribonucleoside triphosphates as substrates. The polypeptide is DNA-directed RNA polymerase subunit beta (Solibacter usitatus (strain Ellin6076)).